The primary structure comprises 155 residues: 6,7-dimethyl-8-ribityllumazine synthase (155 aa).

Residues F18, 49-51 (ALE), and 75-77 (CVI) contribute to the 5-amino-6-(D-ribitylamino)uracil site. 80 to 81 (ET) lines the (2S)-2-hydroxy-3-oxobutyl phosphate pocket. The Proton donor role is filled by H83. N108 is a 5-amino-6-(D-ribitylamino)uracil binding site. (2S)-2-hydroxy-3-oxobutyl phosphate is bound at residue R122.

This sequence belongs to the DMRL synthase family.

The catalysed reaction is (2S)-2-hydroxy-3-oxobutyl phosphate + 5-amino-6-(D-ribitylamino)uracil = 6,7-dimethyl-8-(1-D-ribityl)lumazine + phosphate + 2 H2O + H(+). The protein operates within cofactor biosynthesis; riboflavin biosynthesis; riboflavin from 2-hydroxy-3-oxobutyl phosphate and 5-amino-6-(D-ribitylamino)uracil: step 1/2. Its function is as follows. Catalyzes the formation of 6,7-dimethyl-8-ribityllumazine by condensation of 5-amino-6-(D-ribitylamino)uracil with 3,4-dihydroxy-2-butanone 4-phosphate. This is the penultimate step in the biosynthesis of riboflavin. The chain is 6,7-dimethyl-8-ribityllumazine synthase from Bartonella henselae (strain ATCC 49882 / DSM 28221 / CCUG 30454 / Houston 1) (Rochalimaea henselae).